Consider the following 195-residue polypeptide: MPKLGMQSIRRRQLIDATLEAINEVGMHDATIAQIARRAGVSTGIISHYFRDKNGLLEATMRDITSQLRDAVLNRLHALPQGSAEQRLQAIVDGNFDETQVSNAAMKAWLAFWASSMHQPMLYRLQQVSSRRLLSNLVSEFHRELPRQQAQEAGYGLAALIDGLWLRAALSGKPLDKPLAHSLTRHFITQHLPTD.

The HTH tetR-type domain occupies 8 to 68 (SIRRRQLIDA…ATMRDITSQL (61 aa)). The segment at residues 31 to 50 (TIAQIARRAGVSTGIISHYF) is a DNA-binding region (H-T-H motif).

Its pathway is amine and polyamine biosynthesis; betaine biosynthesis via choline pathway [regulation]. Repressor involved in the biosynthesis of the osmoprotectant glycine betaine. It represses transcription of the choline transporter BetT and the genes of BetAB involved in the synthesis of glycine betaine. The protein is HTH-type transcriptional regulator BetI of Escherichia coli O17:K52:H18 (strain UMN026 / ExPEC).